A 345-amino-acid polypeptide reads, in one-letter code: N-acetyl-gamma-glutamyl-phosphate reductase (345 aa).

The active site involves Cys-149.

It belongs to the NAGSA dehydrogenase family. Type 1 subfamily.

The protein resides in the cytoplasm. It carries out the reaction N-acetyl-L-glutamate 5-semialdehyde + phosphate + NADP(+) = N-acetyl-L-glutamyl 5-phosphate + NADPH + H(+). It participates in amino-acid biosynthesis; L-arginine biosynthesis; N(2)-acetyl-L-ornithine from L-glutamate: step 3/4. Its function is as follows. Catalyzes the NADPH-dependent reduction of N-acetyl-5-glutamyl phosphate to yield N-acetyl-L-glutamate 5-semialdehyde. The chain is N-acetyl-gamma-glutamyl-phosphate reductase from Geobacillus stearothermophilus (Bacillus stearothermophilus).